The chain runs to 230 residues: Large ribosomal subunit protein uL3 (230 aa).

Disordered regions lie at residues 125–149 (QAIG…SLGD) and 210–230 (PNPK…VKNE).

The protein belongs to the universal ribosomal protein uL3 family. Part of the 50S ribosomal subunit. Forms a cluster with proteins L14 and L19.

Functionally, one of the primary rRNA binding proteins, it binds directly near the 3'-end of the 23S rRNA, where it nucleates assembly of the 50S subunit. This Mesomycoplasma hyopneumoniae (strain 232) (Mycoplasma hyopneumoniae) protein is Large ribosomal subunit protein uL3.